The sequence spans 284 residues: tRNA-cytidine(32) 2-sulfurtransferase (284 aa).

Positions 1–11 (MTFHQPVSETA) are enriched in polar residues. The interval 1–20 (MTFHQPVSETAQPDEASGHP) is disordered. Residues 63–68 (SGGKDS) carry the PP-loop motif motif. The [4Fe-4S] cluster site is built by C138, C141, and C229.

The protein belongs to the TtcA family. Homodimer. Mg(2+) serves as cofactor. Requires [4Fe-4S] cluster as cofactor.

Its subcellular location is the cytoplasm. The enzyme catalyses cytidine(32) in tRNA + S-sulfanyl-L-cysteinyl-[cysteine desulfurase] + AH2 + ATP = 2-thiocytidine(32) in tRNA + L-cysteinyl-[cysteine desulfurase] + A + AMP + diphosphate + H(+). It participates in tRNA modification. Catalyzes the ATP-dependent 2-thiolation of cytidine in position 32 of tRNA, to form 2-thiocytidine (s(2)C32). The sulfur atoms are provided by the cysteine/cysteine desulfurase (IscS) system. The chain is tRNA-cytidine(32) 2-sulfurtransferase from Chelativorans sp. (strain BNC1).